The sequence spans 390 residues: Calcium-binding and spermatid-specific protein 1 (390 aa).

3 disordered regions span residues 1–23 (MAEDGSPKIYSRPPRDSSKTPTE), 82–109 (ASLKSTTLPEKEITTPTETTNSKPKESI), and 146–225 (TIDA…TIPD). The segment covering 162 to 174 (ETQEDSSANDEDT) has biased composition (acidic residues). The span at 184-193 (TDVSSSTSSD) shows a compositional bias: low complexity. 2 positions are modified to phosphoserine: serine 251 and serine 267. A Phosphothreonine; by CK2 modification is found at threonine 280. Serine 312 is modified (phosphoserine). The segment covering 330-344 (EPHVDTKNSPEKDAA) has biased composition (basic and acidic residues). The segment at 330 to 390 (EPHVDTKNSP…LKEEPDELMM (61 aa)) is disordered. A phosphoserine mark is found at serine 346, serine 356, serine 371, and serine 375. A compositionally biased stretch (polar residues) spans 346-364 (SVTNVTEEFPSVTSVVEQS).

In terms of tissue distribution, expressed in seminiferous tubules of the testis in step 10 spermatids (stage X), subsequently increasing to reach maximal levels of step 18 elongated spermatids (stage VI) (at protein level). Strongly expressed in testis. Weakly expressed in olfactory epithelium. Expressed in spermatids of seminiferous tubules at steps 4-14 (stages IV to XIV of the seminiferous epithelium classification).

The protein resides in the cytoplasm. The protein localises to the mitochondrion inner membrane. It is found in the cell projection. Its subcellular location is the cilium. It localises to the flagellum. The protein resides in the cytoplasmic vesicle. The protein localises to the secretory vesicle. It is found in the acrosome. Functionally, calcium-binding protein. Essential for maintaining the structural integrity of the sperm flagella. The polypeptide is Calcium-binding and spermatid-specific protein 1 (Cabs1) (Rattus norvegicus (Rat)).